Here is a 642-residue protein sequence, read N- to C-terminus: Threonine--tRNA ligase (642 aa).

One can recognise a TGS domain in the interval 1 to 61 (MPVITLPDGS…EHDAQIAIIT (61 aa)). The catalytic stretch occupies residues 243–534 (DHRKIGKQLD…LTEEYAGFYP (292 aa)). Positions 334, 385, and 511 each coordinate Zn(2+).

It belongs to the class-II aminoacyl-tRNA synthetase family. In terms of assembly, homodimer. Zn(2+) serves as cofactor.

It is found in the cytoplasm. It catalyses the reaction tRNA(Thr) + L-threonine + ATP = L-threonyl-tRNA(Thr) + AMP + diphosphate + H(+). In terms of biological role, catalyzes the attachment of threonine to tRNA(Thr) in a two-step reaction: L-threonine is first activated by ATP to form Thr-AMP and then transferred to the acceptor end of tRNA(Thr). Also edits incorrectly charged L-seryl-tRNA(Thr). This Sodalis glossinidius (strain morsitans) protein is Threonine--tRNA ligase.